Consider the following 210-residue polypeptide: Transcriptional regulator GfcR (210 aa).

The tract at residues 39 to 60 (VERSGAATEPEPRAEPEGPDDI) is disordered. The span at 48–60 (PEPRAEPEGPDDI) shows a compositional bias: basic and acidic residues.

Belongs to the purine/pyrimidine phosphoribosyltransferase family. GfcR subfamily.

Its activity is regulated as follows. Interaction with effectors modulates GfcR activity. 2-keto-3-deoxy-6-phosphogluconate (KDPG), fructose-1,6-bisphosphate (FBP), 2-keto-3-deoxy-6-phosphogalactonate (KDPGal) and glycerol-3-phosphate (G3P), which are intermediates of sugar and glycerol degradation pathways, can act as inducer molecules. In terms of biological role, DNA-binding transcriptional regulator that functions as a regulator of central sugar catabolic pathways. Is both a local regulator of specific steps in the pathways for D-glucose and D-fructose degradation and a global regulator of hexose catabolism. In the presence of D-glucose, activates expression of the gene encoding the gluconate dehydratase (gad), which is involved in D-glucose catabolism via the semiphosphorylative Entner-Doudoroff (spED) pathway. In the presence of D-fructose, activates expression of the genes encoding the PTS system EIIC component (ptfC) and the fructose-1,6-bisphosphate aldolase (fba), which are involved in D-fructose uptake and degradation via the modified Embden-Meyerhof pathway. In addition, in the presence of D-glucose, D-fructose, D-galactose or glycerol, it activates expression of the genes encoding glyceraldehyde-3-phosphate dehydrogenase (gap) and pyruvate kinase (pykA), enzymes common to all four degradation pathways. Acts by binding directly to the promoter region of the regulated genes. The protein is Transcriptional regulator GfcR of Haloferax volcanii (strain ATCC 29605 / DSM 3757 / JCM 8879 / NBRC 14742 / NCIMB 2012 / VKM B-1768 / DS2) (Halobacterium volcanii).